Reading from the N-terminus, the 465-residue chain is Cysteine--tRNA ligase (465 aa).

Residue cysteine 27 coordinates Zn(2+). The 'HIGH' region motif lies at 29 to 39 (PTVYDDAHLGH). Cysteine 207, histidine 237, and glutamate 241 together coordinate Zn(2+). The 'KMSKS' region signature appears at 269 to 273 (KMSKS). Lysine 272 serves as a coordination point for ATP.

Belongs to the class-I aminoacyl-tRNA synthetase family. Monomer. Requires Zn(2+) as cofactor.

Its subcellular location is the cytoplasm. The catalysed reaction is tRNA(Cys) + L-cysteine + ATP = L-cysteinyl-tRNA(Cys) + AMP + diphosphate. In Nitratiruptor sp. (strain SB155-2), this protein is Cysteine--tRNA ligase.